Here is a 153-residue protein sequence, read N- to C-terminus: UPF0178 protein Atu1478 (153 aa).

This sequence belongs to the UPF0178 family.

This is UPF0178 protein Atu1478 from Agrobacterium fabrum (strain C58 / ATCC 33970) (Agrobacterium tumefaciens (strain C58)).